We begin with the raw amino-acid sequence, 438 residues long: MENDMETATMTQDYHIANINLADWGRKEIEIAETEMPGLMALRKKYKNAKPLKGARIAGCIHMTIQTAVLIETLMLLGAEVRWSSCNIFSTQDHAAAALAQKGIPIFAWKGETEEEYWRCIASTLEGPKGWTPNLLLDDGGDLTAHTLQKHPELCQNIRGVSEETTTGVHRLYRMLKEGSLKFPAINVNDSVTKSKFDNLYGCRESLIDSIKRATDVMIAGKRVVVCGYGDVGKGCAQSLRAYGATVYITEIDPICALQAAMEGYRVVTMDEMADSADIFVTATGNTDIITHEHMLKMKDQAIVCNIGHFDNEIDIASLQDYQWMNIKPQVDQVIFPDGKRLMVLAQGRLVNLGCATGHPSFVMSNSFTNQVLAQIELWQYPEKYPIGVYVLPKHLDEEVARLHLERVGAKLTTLTEKQADYIGVDPEGPFKSEHYRY.

Substrate-binding residues include Thr64, Asp139, and Glu164. 165-167 contributes to the NAD(+) binding site; that stretch reads TTT. Positions 194 and 198 each coordinate substrate. NAD(+)-binding positions include Asn199, 228 to 233, Glu251, Asn286, 307 to 309, and Asn352; these read GYGDVG and IGH.

It belongs to the adenosylhomocysteinase family. NAD(+) is required as a cofactor.

It localises to the cytoplasm. It carries out the reaction S-adenosyl-L-homocysteine + H2O = L-homocysteine + adenosine. The protein operates within amino-acid biosynthesis; L-homocysteine biosynthesis; L-homocysteine from S-adenosyl-L-homocysteine: step 1/1. In terms of biological role, may play a key role in the regulation of the intracellular concentration of adenosylhomocysteine. The protein is Adenosylhomocysteinase of Coxiella burnetii (strain CbuK_Q154) (Coxiella burnetii (strain Q154)).